We begin with the raw amino-acid sequence, 256 residues long: MNNIWWQTKGQGNVHLVLLHGWGLNAEVWRCIDEELSSHFTLHLVDLPGFGRSRGFGALSLADMAEAVLRQAPDKAIWLGWSLGGLVASQIALTHPERVQALVTVASSPCFSARDEWPGIKPDVLAGFQQQLSDDFQRTVERFLALQTMGTETARQDARALKKTVLALPMPEVDVLNGGLEILKTVDLRLPLQNVSMPFLRLYGYLDGLVPRKVVPMLDKLWPHSESYIFAKAAHAPFISHPVEFHHLLVALKQRV.

One can recognise an AB hydrolase-1 domain in the interval H15–P242. Residues W22, S82–L83, and F143–Q147 contribute to the substrate site. Catalysis depends on S82, which acts as the Nucleophile. Catalysis depends on residues D207 and H235. Position 235 (H235) interacts with substrate.

Belongs to the AB hydrolase superfamily. Carboxylesterase BioH family. Monomer.

The protein localises to the cytoplasm. It catalyses the reaction 6-carboxyhexanoyl-[ACP] methyl ester + H2O = 6-carboxyhexanoyl-[ACP] + methanol + H(+). The protein operates within cofactor biosynthesis; biotin biosynthesis. Functionally, the physiological role of BioH is to remove the methyl group introduced by BioC when the pimeloyl moiety is complete. It allows to synthesize pimeloyl-ACP via the fatty acid synthetic pathway through the hydrolysis of the ester bonds of pimeloyl-ACP esters. The sequence is that of Pimeloyl-[acyl-carrier protein] methyl ester esterase from Escherichia coli O45:K1 (strain S88 / ExPEC).